The sequence spans 1103 residues: Ubiquitin carboxyl-terminal hydrolase 7 (1103 aa).

The span at 1–11 (MNHQQQQQQQQ) shows a compositional bias: low complexity. Positions 1–40 (MNHQQQQQQQQKAGEQQLSEPEDMEMEAGDTDDPPRITQN) are disordered. The interval 1–209 (MNHQQQQQQQ…APHGVAWDSK (209 aa)) is interaction with TSPYL5. The residue at position 19 (S19) is a Phosphoserine. A compositionally biased stretch (acidic residues) spans 20-32 (EPEDMEMEAGDTD). S50 and S54 each carry phosphoserine. The segment at 54-209 (SNAEEDMEDD…APHGVAWDSK (156 aa)) is interaction with p53/TP53 and MDM2. Positions 69–196 (EATFQFTVER…DDKVTFEVFV (128 aa)) constitute an MATH domain. A necessary for nuclear localization region spans residues 71 to 206 (TFQFTVERFS…QADAPHGVAW (136 aa)). Positions 215-522 (VGLKNQGATC…NAYMLVYIRE (308 aa)) constitute a USP domain. C224 functions as the Nucleophile in the catalytic mechanism. Residue H465 is the Proton acceptor of the active site. N6-acetyllysine; alternate is present on K870. K870 participates in a covalent cross-link: Glycyl lysine isopeptide (Lys-Gly) (interchain with G-Cter in SUMO2); alternate. K870 is covalently cross-linked (Glycyl lysine isopeptide (Lys-Gly) (interchain with G-Cter in ubiquitin); alternate). K883 is covalently cross-linked (Glycyl lysine isopeptide (Lys-Gly) (interchain with G-Cter in SUMO2)). S964 bears the Phosphoserine mark. K1085 and K1097 each carry N6-acetyllysine.

This sequence belongs to the peptidase C19 family. In terms of assembly, monomer. Homodimer. Part of a complex with DAXX, MDM2, RASSF1 and USP7. Part of a complex with DAXX, MDM2 and USP7. Interacts with MDM2; the interaction is independent of p53/TP53. Interacts with DAXX; the interaction is direct and independent of MDM2 and p53/TP53. Component of a complex composed of KMT2E, OGT and USP7; the complex stabilizes KMT2E, preventing KMT2E ubiquitination and proteasomal-mediated degradation. Interacts (via MATH domain) with KMT2E. Interacts with OGT. Interacts with FOXO4; the interaction is enhanced in presence of hydrogen peroxide and occurs independently of p53/TP53. Interacts with p53/TP53; the interaction is enhanced in response to DNA damage; the interaction is impaired by TSPYL5. Interacts with PTEN; the interaction is direct. Interacts with ATXN1 and the strength of interaction is influenced by the length of the poly-Gln region in ATXN1. A weaker interaction seen with mutants having longer poly-Gln regions. Interacts with KIAA1530/UVSSA. Interacts with MEX3C and antagonizes its ability to degrade mRNA. Interacts with DNMT1 and UHRF1. Interacts with FOXP3. Interacts (via MATH domain) with RNF220. Associated component of the Polycomb group (PcG) multiprotein PRC1-like complex. Interacts with EPOP. Interacts with OTUD4 and USP9X; the interaction is direct. Interacts with CRY2. Interacts with REST. Interacts with ERCC6. Part of a complex consisting of USP7, MAGEL2 and TRIM27; directly interacts with MAGEL2; directly interacts with TRIM27. Post-translationally, polyneddylated. Not sumoylated. In terms of processing, ubiquitinated at Lys-870. Polyubiquitinated. Strongly expressed in the testis, spleen and brain. Weakly expressed in the stomach, small intestine, skeletal muscle and uterus.

The protein resides in the nucleus. The protein localises to the cytoplasm. It is found in the PML body. It localises to the chromosome. The enzyme catalyses Thiol-dependent hydrolysis of ester, thioester, amide, peptide and isopeptide bonds formed by the C-terminal Gly of ubiquitin (a 76-residue protein attached to proteins as an intracellular targeting signal).. Hydrolase that deubiquitinates target proteins such as ARMC5, FOXO4, DEPTOR, KAT5, p53/TP53, MDM2, ERCC6, DNMT1, UHRF1, PTEN, KMT2E/MLL5 and DAXX. Together with DAXX, prevents MDM2 self-ubiquitination and enhances the E3 ligase activity of MDM2 towards p53/TP53, thereby promoting p53/TP53 ubiquitination and proteasomal degradation. Deubiquitinates p53/TP53, preventing degradation of p53/TP53, and enhances p53/TP53-dependent transcription regulation, cell growth repression and apoptosis. Deubiquitinates p53/TP53 and MDM2 and strongly stabilizes p53/TP53 even in the presence of excess MDM2, and also induces p53/TP53-dependent cell growth repression and apoptosis. Deubiquitination of FOXO4 in presence of hydrogen peroxide is not dependent on p53/TP53 and inhibits FOXO4-induced transcriptional activity. In association with DAXX, is involved in the deubiquitination and translocation of PTEN from the nucleus to the cytoplasm, both processes that are counteracted by PML. Deubiquitinates KMT2E preventing KMT2E proteasomal-mediated degradation. Involved in cell proliferation during early embryonic development. Involved in transcription-coupled nucleotide excision repair (TC-NER) in response to UV damage: recruited to DNA damage sites following interaction with KIAA1530/UVSSA and promotes deubiquitination of ERCC6, preventing UV-induced degradation of ERCC6. Involved in maintenance of DNA methylation via its interaction with UHRF1 and DNMT1: acts by mediating deubiquitination of UHRF1 and DNMT1, preventing their degradation and promoting DNA methylation by DNMT1. Deubiquitinates alkylation repair enzyme ALKBH3. OTUD4 recruits USP7 and USP9X to stabilize ALKBH3, thereby promoting the repair of alkylated DNA lesions. Acts as a chromatin regulator via its association with the Polycomb group (PcG) multiprotein PRC1-like complex; may act by deubiquitinating components of the PRC1-like complex. Able to mediate deubiquitination of histone H2B; it is however unsure whether this activity takes place in vivo. Exhibits a preference towards 'Lys-48'-linked ubiquitin chains. Increases regulatory T-cells (Treg) suppressive capacity by deubiquitinating and stabilizing transcription factor FOXP3 which is crucial for Treg cell function. Plays a role in the maintenance of the circadian clock periodicity via deubiquitination and stabilization of the CRY1 and CRY2 proteins. Deubiquitinates REST, thereby stabilizing REST and promoting the maintenance of neural progenitor cells. Deubiquitinates SIRT7, inhibiting SIRT7 histone deacetylase activity and regulating gluconeogenesis. Involved in the regulation of WASH-dependent actin polymerization at the surface of endosomes and the regulation of endosomal protein recycling. It maintains optimal WASH complex activity and precise F-actin levels via deubiquitination of TRIM27 and WASHC1. Mediates the deubiquitination of phosphorylated DEPTOR, promoting its stability and leading to decreased mTORC1 signaling. This chain is Ubiquitin carboxyl-terminal hydrolase 7 (Usp7), found in Rattus norvegicus (Rat).